The following is a 279-amino-acid chain: Energy-coupling factor transporter ATP-binding protein EcfA1 (279 aa).

Positions 5–240 constitute an ABC transporter domain; that stretch reads IELKKVTFNY…GDELLQLGLD (236 aa). 40-47 serves as a coordination point for ATP; sequence GHNGSGKS.

This sequence belongs to the ABC transporter superfamily. Energy-coupling factor EcfA family. As to quaternary structure, forms a stable energy-coupling factor (ECF) transporter complex composed of 2 membrane-embedded substrate-binding proteins (S component), 2 ATP-binding proteins (A component) and 2 transmembrane proteins (T component).

Its subcellular location is the cell membrane. In terms of biological role, ATP-binding (A) component of a common energy-coupling factor (ECF) ABC-transporter complex. Unlike classic ABC transporters this ECF transporter provides the energy necessary to transport a number of different substrates. This Streptococcus pyogenes serotype M12 (strain MGAS2096) protein is Energy-coupling factor transporter ATP-binding protein EcfA1.